The primary structure comprises 490 residues: Ribulose bisphosphate carboxylase large chain (490 aa).

The substrate site is built by asparagine 127 and threonine 177. Lysine 179 functions as the Proton acceptor in the catalytic mechanism. Lysine 181 provides a ligand contact to substrate. Mg(2+) is bound by residues lysine 205, aspartate 207, and glutamate 208. The residue at position 205 (lysine 205) is an N6-carboxylysine. Catalysis depends on histidine 297, which acts as the Proton acceptor. Residues arginine 298, histidine 330, and serine 382 each coordinate substrate.

It belongs to the RuBisCO large chain family. Type I subfamily. Heterohexadecamer of 8 large chains and 8 small chains. It depends on Mg(2+) as a cofactor.

The protein resides in the plastid. The protein localises to the chloroplast. The catalysed reaction is 2 (2R)-3-phosphoglycerate + 2 H(+) = D-ribulose 1,5-bisphosphate + CO2 + H2O. The enzyme catalyses D-ribulose 1,5-bisphosphate + O2 = 2-phosphoglycolate + (2R)-3-phosphoglycerate + 2 H(+). Functionally, ruBisCO catalyzes two reactions: the carboxylation of D-ribulose 1,5-bisphosphate, the primary event in carbon dioxide fixation, as well as the oxidative fragmentation of the pentose substrate in the photorespiration process. Both reactions occur simultaneously and in competition at the same active site. The polypeptide is Ribulose bisphosphate carboxylase large chain (Thalassiosira pseudonana (Marine diatom)).